We begin with the raw amino-acid sequence, 175 residues long: Glycine-rich RNA-binding protein 1 (175 aa).

The 79-residue stretch at alanine 3 to serine 81 folds into the RRM domain. The interval glycine 114–glutamine 175 is disordered. A compositionally biased stretch (low complexity) spans proline 122–tyrosine 131. Over residues proline 132–glutamine 141 the composition is skewed to gly residues. Positions glutamine 142–proline 162 are enriched in low complexity. Over residues glutamine 163–glutamine 175 the composition is skewed to gly residues.

Belongs to the glycine-rich RNA-binding protein family. In terms of assembly, part of large ribonucleoprotein complexes (mRNPs) containing RNA-binding proteins RRM4 and PAB1, endosome-binding protein UPA1, core scaffold protein UPA2 and associated factor GRP1.

It is found in the endosome. Functionally, component of endosomal mRNA transport that regulates polarity of the infectious hyphae by transporting a broad spectrum of cargo mRNAs from the nucleus to cell poles. The polypeptide is Glycine-rich RNA-binding protein 1 (Mycosarcoma maydis (Corn smut fungus)).